A 210-amino-acid polypeptide reads, in one-letter code: Putative polysaccharide-binding protein (210 aa).

Positions 1–22 (MGFLKGTAAALTLLSAAAAASA) are cleaved as a signal peptide. CBM1 domains are found at residues 23–62 (CGVL…AMPG), 63–105 (MMGQ…LANK), 125–165 (CGKE…APPP), and 166–210 (KMGE…PMHP).

This is Putative polysaccharide-binding protein from Porphyra purpurea (Red seaweed).